A 245-amino-acid polypeptide reads, in one-letter code: Malonyl-[acyl-carrier protein] O-methyltransferase (245 aa).

Belongs to the methyltransferase superfamily.

The catalysed reaction is malonyl-[ACP] + S-adenosyl-L-methionine = malonyl-[ACP] methyl ester + S-adenosyl-L-homocysteine. Its pathway is cofactor biosynthesis; biotin biosynthesis. In terms of biological role, converts the free carboxyl group of a malonyl-thioester to its methyl ester by transfer of a methyl group from S-adenosyl-L-methionine (SAM). It allows to synthesize pimeloyl-ACP via the fatty acid synthetic pathway. The sequence is that of Malonyl-[acyl-carrier protein] O-methyltransferase from Calditerrivibrio nitroreducens (strain DSM 19672 / NBRC 101217 / Yu37-1).